A 1366-amino-acid polypeptide reads, in one-letter code: DNA-directed RNA polymerase subunit beta (1366 aa).

This sequence belongs to the RNA polymerase beta chain family. As to quaternary structure, the RNAP catalytic core consists of 2 alpha, 1 beta, 1 beta' and 1 omega subunit. When a sigma factor is associated with the core the holoenzyme is formed, which can initiate transcription.

The catalysed reaction is RNA(n) + a ribonucleoside 5'-triphosphate = RNA(n+1) + diphosphate. Functionally, DNA-dependent RNA polymerase catalyzes the transcription of DNA into RNA using the four ribonucleoside triphosphates as substrates. This chain is DNA-directed RNA polymerase subunit beta, found in Polynucleobacter asymbioticus (strain DSM 18221 / CIP 109841 / QLW-P1DMWA-1) (Polynucleobacter necessarius subsp. asymbioticus).